The sequence spans 141 residues: Large ribosomal subunit protein uL11 (141 aa).

It belongs to the universal ribosomal protein uL11 family. In terms of assembly, part of the ribosomal stalk of the 50S ribosomal subunit. Interacts with L10 and the large rRNA to form the base of the stalk. L10 forms an elongated spine to which L12 dimers bind in a sequential fashion forming a multimeric L10(L12)X complex. In terms of processing, one or more lysine residues are methylated.

Functionally, forms part of the ribosomal stalk which helps the ribosome interact with GTP-bound translation factors. The chain is Large ribosomal subunit protein uL11 from Lactobacillus acidophilus (strain ATCC 700396 / NCK56 / N2 / NCFM).